The chain runs to 172 residues: Large ribosomal subunit protein uL10 (172 aa).

It belongs to the universal ribosomal protein uL10 family. As to quaternary structure, part of the ribosomal stalk of the 50S ribosomal subunit. The N-terminus interacts with L11 and the large rRNA to form the base of the stalk. The C-terminus forms an elongated spine to which L12 dimers bind in a sequential fashion forming a multimeric L10(L12)X complex.

In terms of biological role, forms part of the ribosomal stalk, playing a central role in the interaction of the ribosome with GTP-bound translation factors. The protein is Large ribosomal subunit protein uL10 of Brucella suis (strain ATCC 23445 / NCTC 10510).